A 173-amino-acid polypeptide reads, in one-letter code: Cytochrome c-type biogenesis protein CcmE (173 aa).

The Cytoplasmic portion of the chain corresponds to 1 to 8; sequence MNPRRKSR. The helical; Signal-anchor for type II membrane protein transmembrane segment at 9-29 threads the bilayer; that stretch reads FKLVIFVVLGIAIASGLMLYA. Over 30–173 the chain is Periplasmic; sequence LRQNIDLFYT…RDRQEKEGAK (144 aa). Heme is bound by residues His-131 and Tyr-135. Residues 152 to 173 form a disordered region; the sequence is GIEAADLKGESARDRQEKEGAK. Residues 156 to 173 are compositionally biased toward basic and acidic residues; it reads ADLKGESARDRQEKEGAK.

This sequence belongs to the CcmE/CycJ family.

Its subcellular location is the cell inner membrane. Heme chaperone required for the biogenesis of c-type cytochromes. Transiently binds heme delivered by CcmC and transfers the heme to apo-cytochromes in a process facilitated by CcmF and CcmH. This Haemophilus influenzae (strain ATCC 51907 / DSM 11121 / KW20 / Rd) protein is Cytochrome c-type biogenesis protein CcmE.